The following is a 362-amino-acid chain: Molybdenum import ATP-binding protein ModC (362 aa).

The 235-residue stretch at 4–238 (AGEAAIRARF…LDLPIRLGED (235 aa)) folds into the ABC transporter domain. 38–45 (GHSGSGKT) is a binding site for ATP. The Mop domain maps to 297–362 (GTSILNTLPA…AQIKAVALVG (66 aa)).

This sequence belongs to the ABC transporter superfamily. Molybdate importer (TC 3.A.1.8) family. In terms of assembly, the complex is composed of two ATP-binding proteins (ModC), two transmembrane proteins (ModB) and a solute-binding protein (ModA).

Its subcellular location is the cell inner membrane. The enzyme catalyses molybdate(out) + ATP + H2O = molybdate(in) + ADP + phosphate + H(+). Part of the ABC transporter complex ModABC involved in molybdenum import. Responsible for energy coupling to the transport system. The sequence is that of Molybdenum import ATP-binding protein ModC from Thiobacillus denitrificans (strain ATCC 25259 / T1).